Here is a 358-residue protein sequence, read N- to C-terminus: UDP-N-acetylglucosamine--N-acetylmuramyl-(pentapeptide) pyrophosphoryl-undecaprenol N-acetylglucosamine transferase (358 aa).

Residues serine 197 and glutamine 288 each coordinate UDP-N-acetyl-alpha-D-glucosamine.

It belongs to the glycosyltransferase 28 family. MurG subfamily.

It is found in the cell membrane. It catalyses the reaction Mur2Ac(oyl-L-Ala-gamma-D-Glu-L-Lys-D-Ala-D-Ala)-di-trans,octa-cis-undecaprenyl diphosphate + UDP-N-acetyl-alpha-D-glucosamine = beta-D-GlcNAc-(1-&gt;4)-Mur2Ac(oyl-L-Ala-gamma-D-Glu-L-Lys-D-Ala-D-Ala)-di-trans,octa-cis-undecaprenyl diphosphate + UDP + H(+). Its pathway is cell wall biogenesis; peptidoglycan biosynthesis. Cell wall formation. Catalyzes the transfer of a GlcNAc subunit on undecaprenyl-pyrophosphoryl-MurNAc-pentapeptide (lipid intermediate I) to form undecaprenyl-pyrophosphoryl-MurNAc-(pentapeptide)GlcNAc (lipid intermediate II). The sequence is that of UDP-N-acetylglucosamine--N-acetylmuramyl-(pentapeptide) pyrophosphoryl-undecaprenol N-acetylglucosamine transferase from Streptococcus agalactiae serotype Ia (strain ATCC 27591 / A909 / CDC SS700).